A 387-amino-acid chain; its full sequence is Ferrochelatase (387 aa).

Residues histidine 196 and glutamate 277 each coordinate Fe cation.

This sequence belongs to the ferrochelatase family.

The protein resides in the cytoplasm. The catalysed reaction is heme b + 2 H(+) = protoporphyrin IX + Fe(2+). The protein operates within porphyrin-containing compound metabolism; protoheme biosynthesis; protoheme from protoporphyrin-IX: step 1/1. Catalyzes the ferrous insertion into protoporphyrin IX. The chain is Ferrochelatase from Synechococcus elongatus (strain ATCC 33912 / PCC 7942 / FACHB-805) (Anacystis nidulans R2).